The following is a 948-amino-acid chain: Bifunctional uridylyltransferase/uridylyl-removing enzyme (948 aa).

A uridylyltransferase region spans residues 1-372 (METHHIDFST…RFANRSRKIP (372 aa)). Residues 373–728 (GTVEFVEDRG…VRTDSFHAIT (356 aa)) form a uridylyl-removing region. In terms of domain architecture, HD spans 489–605 (VDEHLIRAVE…IDFADRVQSL (117 aa)). ACT domains are found at residues 729–810 (EITV…EVIA) and 840–921 (VIEV…ERMP).

This sequence belongs to the GlnD family. The cofactor is Mg(2+).

It carries out the reaction [protein-PII]-L-tyrosine + UTP = [protein-PII]-uridylyl-L-tyrosine + diphosphate. The catalysed reaction is [protein-PII]-uridylyl-L-tyrosine + H2O = [protein-PII]-L-tyrosine + UMP + H(+). Its activity is regulated as follows. Uridylyltransferase (UTase) activity is inhibited by glutamine, while glutamine activates uridylyl-removing (UR) activity. In terms of biological role, modifies, by uridylylation and deuridylylation, the PII regulatory proteins (GlnB and homologs), in response to the nitrogen status of the cell that GlnD senses through the glutamine level. Under low glutamine levels, catalyzes the conversion of the PII proteins and UTP to PII-UMP and PPi, while under higher glutamine levels, GlnD hydrolyzes PII-UMP to PII and UMP (deuridylylation). Thus, controls uridylylation state and activity of the PII proteins, and plays an important role in the regulation of nitrogen fixation and metabolism. The polypeptide is Bifunctional uridylyltransferase/uridylyl-removing enzyme (Rhizobium tropici).